Reading from the N-terminus, the 465-residue chain is Phenylalanine--tRNA ligase alpha subunit (465 aa).

L-phenylalanine-binding residues include Thr311 and Phe389. Glu391 contacts Mg(2+).

The protein belongs to the class-II aminoacyl-tRNA synthetase family. Phe-tRNA synthetase alpha subunit type 2 subfamily. In terms of assembly, tetramer of two alpha and two beta subunits. Requires Mg(2+) as cofactor.

It localises to the cytoplasm. The catalysed reaction is tRNA(Phe) + L-phenylalanine + ATP = L-phenylalanyl-tRNA(Phe) + AMP + diphosphate + H(+). The protein is Phenylalanine--tRNA ligase alpha subunit of Metallosphaera sedula (strain ATCC 51363 / DSM 5348 / JCM 9185 / NBRC 15509 / TH2).